We begin with the raw amino-acid sequence, 272 residues long: Transcription factor PU.1 (272 aa).

Residues 126-165 (SPAHQQSSDEEEGERQSPPLEVSDGEADGLEPGPGLLHGE) form a disordered region. Residues Ser-142 and Ser-148 each carry the phosphoserine modification. A compositionally biased stretch (low complexity) spans 155-165 (LEPGPGLLHGE). The ETS DNA-binding region spans 172-255 (IRLYQFLLDL…VKKKLTYQFS (84 aa)). DNA-binding residues include Lys-219, Arg-232, Arg-235, and Lys-245.

It belongs to the ETS family. As to quaternary structure, binds DNA as a monomer. Can form homomers. Directly interacts with CEBPD/NF-IL6-beta; this interaction does not affect DNA-binding properties of each partner. Interacts with NONO/p54(nrb). Interacts with RUNX1/AML1. Interacts with GFI1; the interaction represses SPI1 transcriptional activity, hence blocks SPI1-induced macrophage differentiation of myeloid progenitor cells. Interacts with CEBPE. Interacts with IRF4/Pip and IRF8. Interacts with JUN. Interacts with RB1. Interacts with TBP. Expressed in spleen, thymus and bone-marrow macrophages.

It is found in the nucleus. With respect to regulation, transcriptional activity at macrophage-specific genes is inhibited by interaction with GFI1, which results in inhibition of SPI1-induced macrophage differentiation of myeloid progenitor cells, but not that of the granulocyte lineage. Pioneer transcription factor, which controls hematopoietic cell fate by decompacting stem cell heterochromatin and allowing other transcription factors to enter otherwise inaccessible genomic sites. Once in open chromatin, can directly control gene expression by binding genetic regulatory elements and can also more broadly influence transcription by recruiting transcription factors, such as interferon regulatory factors (IRFs), to otherwise inaccessible genomic regions. Transcriptionally activates genes important for myeloid and lymphoid lineages, such as CSF1R. Transcriptional activation from certain promoters, possibly containing low affinity binding sites, is achieved cooperatively with other transcription factors. FCER1A transactivation is achieved in cooperation with GATA1. May be particularly important for the pro- to pre-B cell transition. Binds (via the ETS domain) onto the purine-rich DNA core sequence 5'-GAGGAA-3', also known as the PU-box. In vitro can bind RNA and interfere with pre-mRNA splicing. The protein is Transcription factor PU.1 (Spi1) of Mus musculus (Mouse).